We begin with the raw amino-acid sequence, 475 residues long: Glutamate--tRNA ligase 1 (475 aa).

Positions 11–21 match the 'HIGH' region motif; that stretch reads PSPTGYLHIGG. Positions 240-244 match the 'KMSKS' region motif; that stretch reads KLSKR. K243 serves as a coordination point for ATP.

The protein belongs to the class-I aminoacyl-tRNA synthetase family. Glutamate--tRNA ligase type 1 subfamily. In terms of assembly, monomer.

The protein localises to the cytoplasm. It carries out the reaction tRNA(Glu) + L-glutamate + ATP = L-glutamyl-tRNA(Glu) + AMP + diphosphate. In terms of biological role, catalyzes the attachment of glutamate to tRNA(Glu) in a two-step reaction: glutamate is first activated by ATP to form Glu-AMP and then transferred to the acceptor end of tRNA(Glu). This is Glutamate--tRNA ligase 1 from Methylobacterium radiotolerans (strain ATCC 27329 / DSM 1819 / JCM 2831 / NBRC 15690 / NCIMB 10815 / 0-1).